The sequence spans 678 residues: Nucleolar protein 9 (678 aa).

Residues 1-15 (MPRDKQKRGRRAEAK) are compositionally biased toward basic residues. Positions 1 to 24 (MPRDKQKRGRRAEAKRKRDDVITD) are disordered. Pumilio repeat units follow at residues 108–143 (EANG…RLFS), 291–334 (GLDN…SLLR), and 382–419 (KILV…SAMD). The tract at residues 477-496 (QRSNQESDGTTSSSNTSSPE) is disordered. Pumilio repeat units lie at residues 524–562 (AVTT…QITS) and 563–600 (RFSG…RFAE).

It localises to the nucleus. The protein localises to the nucleolus. Functionally, RNA-binding nucleolar protein required for pre-rRNA processing. Involved in production of 18S rRNA and assembly of small ribosomal subunit. The protein is Nucleolar protein 9 (NOP9) of Paracoccidioides brasiliensis (strain Pb18).